A 301-amino-acid chain; its full sequence is Rhodopsin (301 aa).

Residues 1-18 are Extracellular-facing; it reads LHMIHLHWYQYPPMNPIM. A helical transmembrane segment spans residues 19–43; that stretch reads YPLLLVFMLITGILCLAGNFVTIWV. Residues 44–55 lie on the Cytoplasmic side of the membrane; that stretch reads FMNTKSLRTPAN. The chain crosses the membrane as a helical span at residues 56 to 78; sequence LLVVNLAMSDFLMMFTMFPPMMI. At 79–92 the chain is on the extracellular side; sequence TCYYHTWTLGATFC. A disulfide bridge links Cys92 with Cys169. Residues 93 to 115 form a helical membrane-spanning segment; it reads QVYAFLGNLCGCASIWTMVFITF. The 'Ionic lock' involved in activated form stabilization signature appears at 116–118; that stretch reads DRY. Topologically, residues 116–134 are cytoplasmic; sequence DRYNVIVKGVAGEPLSTKK. The helical transmembrane segment at 135–155 threads the bilayer; sequence ATLWILTIWILSTTWCVAPFF. Residues 156–182 lie on the Extracellular side of the membrane; the sequence is GWNRYVPEGNLTGCGTDYLSQDILSRS. Residue Asn165 is glycosylated (N-linked (GlcNAc...) asparagine). A helical membrane pass occupies residues 183–204; it reads YLYIYSTWVYFLPLAITIYCYV. The Cytoplasmic segment spans residues 205–245; sequence VIIKAVAAHEKGMRDQAKKMGIKSLRNEEAQKTSAECRLAK. A helical membrane pass occupies residues 246-267; that stretch reads IAMTTVALWFIAWTPYLLINWV. Over 268–278 the chain is Extracellular; sequence GMFARSYLSPV. Residues 279-300 traverse the membrane as a helical segment; that stretch reads YTIWGYVFAKANAVYNPIVYAI. N6-(retinylidene)lysine is present on Lys288.

The protein belongs to the G-protein coupled receptor 1 family. Opsin subfamily. As to quaternary structure, homodimer. Interacts with GNAQ. Post-translationally, contains one covalently linked retinal chromophore.

It localises to the cell projection. Its subcellular location is the rhabdomere membrane. Its function is as follows. Photoreceptor required for image-forming vision at low light intensity. Can use both retinal and 3-dehydroretinal as visual pigment. Light-induced isomerization of 11-cis to all-trans retinal triggers a conformational change that activates signaling via G-proteins. Signaling via GNAQ probably mediates the activation of phospholipase C. The sequence is that of Rhodopsin (RHO) from Orconectes australis (Southern cave crayfish).